We begin with the raw amino-acid sequence, 471 residues long: Eremophilane O-acetyltransferase prx11 (471 aa).

Belongs to the fumigaclavine B O-acetyltransferase family. As to quaternary structure, monomer.

It functions in the pathway sesquiterpene biosynthesis. In terms of biological role, O-acetyltransferase; part of the gene cluster that mediates the biosynthesis of PR-toxin, a bicyclic sesquiterpene belonging to the eremophilane class and acting as a mycotoxin. The first step of the pathway is catalyzed by the aristolochene synthase which performs the cyclization of trans,trans-farnesyl diphosphate (FPP) to the bicyclic sesquiterpene aristolochene. Following the formation of aristolochene, the non-oxygenated aristolochene is converted to the trioxygenated intermediate eremofortin B, via 7-epi-neopetasone. This conversion appears to involve three enzymes, a hydroxysterol oxidase-like enzyme, the quinone-oxidase prx3 that forms the quinone-type-structure in the bicyclic nucleus of aristolochene with the C8-oxo group and the C-3 hydroxyl group, and the P450 monooxygenase prx9 that introduces the epoxide at the double bond between carbons 1 and 2. No monoxy or dioxy-intermediates have been reported to be released to the broth, so these three early oxidative reactions may be coupled together. Eremofortin B is further oxidized by another P450 monooxygenase, that introduces a second epoxide between carbons 7 and 11 prior to acetylation to eremofortin A by the acetyltransferase prx11. The second epoxidation may be performed by a second P450 monooxygenase. After the acetylation step, eremofortin A is converted to eremofortin C and then to PR-toxin. First the conversion of eremofortin A to eremofortin C proceeds by oxidation of the side chain of the molecule at C-12 and is catalyzed by the short-chain oxidoreductase prx1. The cytochrome P450 monooxygenase prx8 also plays a role in this step. The primary alcohol formed at C-12 is finally oxidized by the short-chain alcohol dehydrogenase prx4 that forms PR-toxin. The chain is Eremophilane O-acetyltransferase prx11 from Penicillium rubens (strain ATCC 28089 / DSM 1075 / NRRL 1951 / Wisconsin 54-1255) (Penicillium chrysogenum).